Here is a 146-residue protein sequence, read N- to C-terminus: VHLTPEEKNAVTTLWGKVNVDEVGGEALGRLLVVYPWTQRFFDSFGDLSSPAAVMGNPKVKAHGKKVLGAFSDGLNHLDNLKGTFAQLSELHCDKLHVDPENFKLLGNVLVCVLAHHFGKEFTPQVQAAYQKVVAGVANALAHKYH.

V1 is modified (N-acetylvaline). Positions 2 to 146 (HLTPEEKNAV…VANALAHKYH (145 aa)) constitute a Globin domain. T12 is subject to Phosphothreonine. Residue S44 is modified to Phosphoserine. N6-acetyllysine is present on K59. H63 is a binding site for heme b. An N6-acetyllysine modification is found at K82. H92 serves as a coordination point for heme b. C93 is modified (S-nitrosocysteine). The residue at position 144 (K144) is an N6-acetyllysine.

This sequence belongs to the globin family. In terms of assembly, heterotetramer of two alpha chains and two beta chains. Red blood cells.

Functionally, involved in oxygen transport from the lung to the various peripheral tissues. This Theropithecus gelada (Gelada baboon) protein is Hemoglobin subunit beta (HBB).